The primary structure comprises 316 residues: DNA-directed RNA polymerase III subunit RPC6 (316 aa).

At A2 the chain carries N-acetylalanine. Glycyl lysine isopeptide (Lys-Gly) (interchain with G-Cter in SUMO2) cross-links involve residues K5 and K7. The [4Fe-4S] cluster site is built by C287, C290, C296, and C307.

Belongs to the eukaryotic RPC34/RPC39 RNA polymerase subunit family. In terms of assembly, component of the RNA polymerase III complex consisting of 17 subunits: a ten-subunit horseshoe-shaped catalytic core composed of POLR3A/RPC1, POLR3B/RPC2, POLR1C/RPAC1, POLR1D/RPAC2, POLR3K/RPC10, POLR2E/RPABC1, POLR2F/RPABC2, POLR2H/RPABC3, POLR2K/RPABC4 and POLR2L/RPABC5; a mobile stalk composed of two subunits POLR3H/RPC8 and CRCP/RPC9, protruding from the core and functioning primarily in transcription initiation; and additional subunits homologous to general transcription factors of the RNA polymerase II machinery, POLR3C/RPC3-POLR3F/RPC6-POLR3G/RPC7 heterotrimer required for transcription initiation and POLR3D/RPC4-POLR3E/RPC5 heterodimer involved in both transcription initiation and termination. Directly interacts with POLR3C. Interacts with TBP and TFIIIB90 and GTF3C4. Interacts with MAF1. As part of the RNA polymerase III complex, interacts with PKP2.

It is found in the nucleus. DNA-dependent RNA polymerase catalyzes the transcription of DNA into RNA using the four ribonucleoside triphosphates as substrates. Specific peripheric component of RNA polymerase III (Pol III) which synthesizes small non-coding RNAs including 5S rRNA, snRNAs, tRNAs and miRNAs from at least 500 distinct genomic loci. Part of POLR3C/RPC3-POLR3F/RPC6-POLR3G/RPC7 heterotrimer that coordinates the dynamics of Pol III stalk and clamp modules during the transition from apo to elongation state. Pol III plays a key role in sensing and limiting infection by intracellular bacteria and DNA viruses, including varicella zoster virus. Acts as a nuclear and cytosolic DNA sensor detecting AT-rich DNA, involved in innate immune response. Can sense non-self dsDNA that serves as template for transcription into dsRNA. The non-self RNA polymerase III transcripts, such as Epstein-Barr virus-encoded RNAs (EBERs) induce type I interferon and NF-kappa-B through the RIG-I pathway. Preferentially binds double-stranded DNA (dsDNA). The sequence is that of DNA-directed RNA polymerase III subunit RPC6 from Mus musculus (Mouse).